We begin with the raw amino-acid sequence, 840 residues long: Probable inorganic carbon transporter subunit DabA (840 aa).

Zn(2+) contacts are provided by C355, D357, H539, and C554.

This sequence belongs to the inorganic carbon transporter (TC 9.A.2) DabA family. Forms a complex with DabB. Requires Zn(2+) as cofactor.

Its subcellular location is the cell membrane. Functionally, part of an energy-coupled inorganic carbon pump. The sequence is that of Probable inorganic carbon transporter subunit DabA from Roseiflexus castenholzii (strain DSM 13941 / HLO8).